Reading from the N-terminus, the 227-residue chain is uncharacterized protein (227 aa).

Residues 7 to 26 (IITLTILIFISGLLTAFLLL) traverse the membrane as a helical segment.

Its subcellular location is the membrane. This is an uncharacterized protein from Haemophilus influenzae (strain ATCC 51907 / DSM 11121 / KW20 / Rd).